The chain runs to 348 residues: Carbamoyl phosphate synthase small chain (348 aa).

Residues 1-167 (MKRYLITSDG…VKNIRGKGER (167 aa)) are CPSase. S45, G213, and G215 together coordinate L-glutamine. Residues 168 to 348 (RILFIDLGSK…RRRTEDAAKG (181 aa)) enclose the Glutamine amidotransferase type-1 domain. C242 serves as the catalytic Nucleophile. L-glutamine contacts are provided by F243, Q246, N282, G284, and Y285. Residues H321 and E323 contribute to the active site.

The protein belongs to the CarA family. In terms of assembly, composed of two chains; the small (or glutamine) chain promotes the hydrolysis of glutamine to ammonia, which is used by the large (or ammonia) chain to synthesize carbamoyl phosphate. Tetramer of heterodimers (alpha,beta)4.

The enzyme catalyses hydrogencarbonate + L-glutamine + 2 ATP + H2O = carbamoyl phosphate + L-glutamate + 2 ADP + phosphate + 2 H(+). It catalyses the reaction L-glutamine + H2O = L-glutamate + NH4(+). It participates in amino-acid biosynthesis; L-arginine biosynthesis; carbamoyl phosphate from bicarbonate: step 1/1. It functions in the pathway pyrimidine metabolism; UMP biosynthesis via de novo pathway; (S)-dihydroorotate from bicarbonate: step 1/3. Its function is as follows. Small subunit of the glutamine-dependent carbamoyl phosphate synthetase (CPSase). CPSase catalyzes the formation of carbamoyl phosphate from the ammonia moiety of glutamine, carbonate, and phosphate donated by ATP, constituting the first step of 2 biosynthetic pathways, one leading to arginine and/or urea and the other to pyrimidine nucleotides. The small subunit (glutamine amidotransferase) binds and cleaves glutamine to supply the large subunit with the substrate ammonia. This chain is Carbamoyl phosphate synthase small chain, found in Thermoplasma acidophilum (strain ATCC 25905 / DSM 1728 / JCM 9062 / NBRC 15155 / AMRC-C165).